The following is a 499-amino-acid chain: Putative hydrolase YuaR (499 aa).

Positions 1-26 are cleaved as a signal peptide; that stretch reads MRVIMKPLRRTLVFFIFSVFLCGTVS. In terms of domain architecture, AB hydrolase-1 spans 94–393; that stretch reads GSVIIISGGP…DAFPAVNFER (300 aa). The active-site Nucleophile is S207. D433 is a catalytic residue. H460 (proton donor) is an active-site residue.

The protein belongs to the peptidase S33 family.

This chain is Putative hydrolase YuaR (yuaR), found in Escherichia coli (strain K12).